The chain runs to 360 residues: Magnesium-protoporphyrin IX monomethyl ester [oxidative] cyclase (360 aa).

The tract at residues 1 to 20 (MVPPTAIAEASRSGGEPAIK) is disordered.

This sequence belongs to the AcsF family. The cofactor is Fe cation.

The catalysed reaction is Mg-protoporphyrin IX 13-monomethyl ester + 3 NADPH + 3 O2 + 2 H(+) = 3,8-divinyl protochlorophyllide a + 3 NADP(+) + 5 H2O. The protein operates within porphyrin-containing compound metabolism; chlorophyll biosynthesis (light-independent). In terms of biological role, catalyzes the formation of the isocyclic ring in chlorophyll biosynthesis. Mediates the cyclase reaction, which results in the formation of divinylprotochlorophyllide (Pchlide) characteristic of all chlorophylls from magnesium-protoporphyrin IX 13-monomethyl ester (MgPMME). The protein is Magnesium-protoporphyrin IX monomethyl ester [oxidative] cyclase of Synechococcus sp. (strain RCC307).